A 153-amino-acid chain; its full sequence is Lipoprotein signal peptidase (153 aa).

Helical transmembrane passes span 7–27 (LIII…LNNY), 59–79 (NLIR…IFYM), and 93–113 (SIII…GSVI). Residues Asp114 and Asp132 contribute to the active site. Residues 123–143 (WHFPVFNFADISIFIGFLILI) form a helical membrane-spanning segment.

It belongs to the peptidase A8 family.

The protein resides in the cell membrane. It carries out the reaction Release of signal peptides from bacterial membrane prolipoproteins. Hydrolyzes -Xaa-Yaa-Zaa-|-(S,diacylglyceryl)Cys-, in which Xaa is hydrophobic (preferably Leu), and Yaa (Ala or Ser) and Zaa (Gly or Ala) have small, neutral side chains.. It participates in protein modification; lipoprotein biosynthesis (signal peptide cleavage). Functionally, this protein specifically catalyzes the removal of signal peptides from prolipoproteins. This is Lipoprotein signal peptidase from Wigglesworthia glossinidia brevipalpis.